Reading from the N-terminus, the 494-residue chain is Metal cation symporter ZIP14 (494 aa).

The signal sequence occupies residues 1–34 (MTLRRASGCRQLTLTIGLALTLGLLQWPIGDVRG). Over 35–152 (QDGASPAQVL…PTEAEVWGYG (118 aa)) the chain is Extracellular. The helical transmembrane segment at 153–173 (LLCVTVISLCSLVGASVVPFM) threads the bilayer. The Cytoplasmic portion of the chain corresponds to 174-181 (RKTFYKRL). A helical transmembrane segment spans residues 182-202 (LLYFIALAIGTLYSNALFQLI). The Extracellular segment spans residues 203-219 (PEAFGFDPMEDYYVPKS). Residues 220–240 (AVVFGGFYLFFFTEKILKMIL) traverse the membrane as a helical segment. The Cytoplasmic segment spans residues 241–397 (KPKDTGGHGH…LLNAGMSIQQ (157 aa)). Residues 248–255 (HGHGHSHF) carry the HHHGHXHX-motif motif. Positions 376–381 (EEFPHE) match the XEXPHE-motif motif. Residues 398-418 (ALFFNFLSACCCYLGMGFGIL) form a helical membrane-spanning segment. The Extracellular portion of the chain corresponds to 419 to 426 (AGNNFSPN). The helical transmembrane segment at 427–447 (WIFALAGGMFLYIALADMFPE) threads the bilayer. Residues 448–462 (MNEVSREEEEAGGSG) lie on the Cytoplasmic side of the membrane. Residues 463 to 483 (FLLTFALQNAGLLTGFAIMLV) form a helical membrane-spanning segment. At 484–494 (LTIYSGQIQLG) the chain is on the extracellular side.

Belongs to the ZIP transporter (TC 2.A.5) family. In terms of assembly, homotrimer.

It is found in the cell membrane. Its subcellular location is the apical cell membrane. It localises to the basolateral cell membrane. The protein localises to the early endosome membrane. The protein resides in the late endosome membrane. It is found in the lysosome membrane. It carries out the reaction Zn(2+)(out) + 2 hydrogencarbonate(out) = Zn(2+)(in) + 2 hydrogencarbonate(in). The catalysed reaction is Mn(2+)(out) + 2 hydrogencarbonate(out) = Mn(2+)(in) + 2 hydrogencarbonate(in). It catalyses the reaction Fe(2+)(out) + 2 hydrogencarbonate(out) = Fe(2+)(in) + 2 hydrogencarbonate(in). The enzyme catalyses Cd(2+)(out) + 2 hydrogencarbonate(out) = Cd(2+)(in) + 2 hydrogencarbonate(in). Broad-scope metal ion transporter with a preference for zinc uptake. Also mediates cellular uptake of nontransferrin-bound iron. Its function is as follows. Electroneutral transporter of the plasma membrane mediating the cellular uptake of the divalent metal cations zinc, manganese and iron that are important for tissue homeostasis, metabolism, development and immunity. Functions as an energy-dependent symporter, transporting through the membranes an electroneutral complex composed of a divalent metal cation and two bicarbonate anions. Beside these endogenous cellular substrates, can also import cadmium a non-essential metal which is cytotoxic and carcinogenic. This chain is Metal cation symporter ZIP14, found in Danio rerio (Zebrafish).